Consider the following 127-residue polypeptide: Large ribosomal subunit protein bL17 (127 aa).

The protein belongs to the bacterial ribosomal protein bL17 family. In terms of assembly, part of the 50S ribosomal subunit. Contacts protein L32.

The chain is Large ribosomal subunit protein bL17 from Xanthomonas oryzae pv. oryzae (strain KACC10331 / KXO85).